The chain runs to 27 residues: Dermaseptin-like peptide (27 aa).

Functionally, has antimicrobial activity against the Gram-positive bacterium M.luteus and the yeast C.albicans. Has hemolytic activity on human and duck erythrocytes. The protein is Dermaseptin-like peptide of Schistosoma mansoni (Blood fluke).